Reading from the N-terminus, the 114-residue chain is NADH-ubiquinone oxidoreductase chain 3 (114 aa).

3 helical membrane passes run methionine 1–phenylalanine 21, phenylalanine 55–phenylalanine 75, and methionine 85–phenylalanine 105.

The protein belongs to the complex I subunit 3 family.

Its subcellular location is the mitochondrion membrane. The catalysed reaction is a ubiquinone + NADH + 5 H(+)(in) = a ubiquinol + NAD(+) + 4 H(+)(out). Its function is as follows. Core subunit of the mitochondrial membrane respiratory chain NADH dehydrogenase (Complex I) that is believed to belong to the minimal assembly required for catalysis. Complex I functions in the transfer of electrons from NADH to the respiratory chain. The immediate electron acceptor for the enzyme is believed to be ubiquinone. The protein is NADH-ubiquinone oxidoreductase chain 3 (ND3) of Rhipicephalus sanguineus (Brown dog tick).